The chain runs to 141 residues: Putative pre-16S rRNA nuclease (141 aa).

The protein belongs to the YqgF nuclease family.

The protein localises to the cytoplasm. Could be a nuclease involved in processing of the 5'-end of pre-16S rRNA. The polypeptide is Putative pre-16S rRNA nuclease (Cupriavidus necator (strain ATCC 17699 / DSM 428 / KCTC 22496 / NCIMB 10442 / H16 / Stanier 337) (Ralstonia eutropha)).